The primary structure comprises 562 residues: Non-homologous end joining factor IFFO1 (562 aa).

An LMNA binding region spans residues 65 to 116 (ALRNDLGSNINVLKTLNLRFRCFLAKVHELERRNRLLEKQLQQALEEGKQGR). The region spanning 73–529 (NINVLKTLNL…RLITQSGDRK (457 aa)) is the IF rod domain. Positions 85 to 117 (RCFLAKVHELERRNRLLEKQLQQALEEGKQGRR) form a coiled coil. The interval 154–187 (RVLGSPSRSPAGPLASSAACHTSSSTSTSTAFSS) is disordered. Positions 168-187 (ASSAACHTSSSTSTSTAFSS) are enriched in low complexity. Positions 237-301 (EIRALYNVLA…MKVEQLKAEL (65 aa)) form a coiled coil. A disordered region spans residues 364–401 (MGGRKRERKAAVEEDTSLSESDGPRQPEGAEEESTALS). The XCCR4 binding. Required for localization to the double-strand breaks (DSBs) stretch occupies residues 453 to 528 (EQEDSLEKVI…RRLITQSGDR (76 aa)). A coiled-coil region spans residues 458–504 (LEKVIKDTESLFKTREKEYQETIDQIELELATAKNDMNRHLHEYMEM). Residues 523–562 (TQSGDRKSPAFTAVPLSDPPPPPSETEDSDRDVSSDSSMR) are disordered. Basic and acidic residues predominate over residues 553–562 (RDVSSDSSMR).

It belongs to the intermediate filament family. As to quaternary structure, forms a heterotetramer with XRCC4. The interaction with XRCC4 is direct, involves LIG4-free XRCC4 and leads to relocalization of IFFO1 at the double-strand break (DSB) sites. Interacts with LMNA; the interaction forms an interior nucleoskeleton and the recruitment to DNA double-strand breaks.

It is found in the nucleus. Its subcellular location is the nucleoplasm. It localises to the nucleus inner membrane. The protein localises to the nucleus matrix. Nuclear matrix protein involved in the immobilization of broken DNA ends and the suppression of chromosome translocation during DNA double-strand breaks (DSBs). Interacts with the nuclear lamina component LMNA, resulting in the formation of a nucleoskeleton that will relocalize to the DSB sites in a XRCC4-dependent manner and promote the immobilization of the broken ends, thereby preventing chromosome translocation. Acts as a scaffold that allows the DNA repair protein XRCC4 and LMNA to assemble into a complex at the DSB sites. This chain is Non-homologous end joining factor IFFO1, found in Mus musculus (Mouse).